The chain runs to 156 residues: ATP synthase subunit b (156 aa).

A helical transmembrane segment spans residues 11 to 31 (AIAFVLFVLFCMKYVWPPLMA).

Belongs to the ATPase B chain family. F-type ATPases have 2 components, F(1) - the catalytic core - and F(0) - the membrane proton channel. F(1) has five subunits: alpha(3), beta(3), gamma(1), delta(1), epsilon(1). F(0) has three main subunits: a(1), b(2) and c(10-14). The alpha and beta chains form an alternating ring which encloses part of the gamma chain. F(1) is attached to F(0) by a central stalk formed by the gamma and epsilon chains, while a peripheral stalk is formed by the delta and b chains.

The protein localises to the cell inner membrane. Its function is as follows. F(1)F(0) ATP synthase produces ATP from ADP in the presence of a proton or sodium gradient. F-type ATPases consist of two structural domains, F(1) containing the extramembraneous catalytic core and F(0) containing the membrane proton channel, linked together by a central stalk and a peripheral stalk. During catalysis, ATP synthesis in the catalytic domain of F(1) is coupled via a rotary mechanism of the central stalk subunits to proton translocation. Component of the F(0) channel, it forms part of the peripheral stalk, linking F(1) to F(0). In Citrobacter koseri (strain ATCC BAA-895 / CDC 4225-83 / SGSC4696), this protein is ATP synthase subunit b.